Reading from the N-terminus, the 409-residue chain is MKGVIMIIDGMADRPLEKLSGRTPLEAASTPNMDRIAESGINGIMDPIKPGVRAGSDTSHLSILGYDPYRVYTGRGPFEAAGVGLDVKPGDIAFRCNFATADEDMIITDRRAGRIRSGTSSIARTINSMTIEGFEDVEIIFRESTGHRAVLVLRGPGLGDKVSDADPKVEGKPPKKIKALDGSPESRKTAEVLNRIVKESYEILRDHPVNTGRIERGEAPANIILPRGAGAVPHVEKFQERYDLKAACIAETGLIKGIGHLTGMDVIDVEGATGGIDTDLESIKNAISSAIAADYDFLLINIDGADEAGHDGDLEGKVRFIERVDSILGDLMGDDIYFILTADHSTPVSVMDHTGDPVPIAITGPEVRVDDVTSFSERAAAAGGLCRIRGSDVMDILLDLMNKKEKFGA.

Residues 163 to 173 (SDADPKVEGKP) are compositionally biased toward basic and acidic residues. The segment at 163–184 (SDADPKVEGKPPKKIKALDGSP) is disordered.

This sequence belongs to the BPG-independent phosphoglycerate mutase family. A-PGAM subfamily.

The enzyme catalyses (2R)-2-phosphoglycerate = (2R)-3-phosphoglycerate. It participates in carbohydrate degradation; glycolysis; pyruvate from D-glyceraldehyde 3-phosphate: step 3/5. Catalyzes the interconversion of 2-phosphoglycerate and 3-phosphoglycerate. The protein is 2,3-bisphosphoglycerate-independent phosphoglycerate mutase 1 (apgM1) of Methanothermobacter thermautotrophicus (strain ATCC 29096 / DSM 1053 / JCM 10044 / NBRC 100330 / Delta H) (Methanobacterium thermoautotrophicum).